Reading from the N-terminus, the 193-residue chain is NADH-quinone oxidoreductase subunit B (193 aa).

Positions 72, 73, 137, and 167 each coordinate [4Fe-4S] cluster.

It belongs to the complex I 20 kDa subunit family. As to quaternary structure, NDH-1 is composed of 14 different subunits. Subunits NuoB, C, D, E, F, and G constitute the peripheral sector of the complex. [4Fe-4S] cluster serves as cofactor.

Its subcellular location is the cell inner membrane. The catalysed reaction is a quinone + NADH + 5 H(+)(in) = a quinol + NAD(+) + 4 H(+)(out). In terms of biological role, NDH-1 shuttles electrons from NADH, via FMN and iron-sulfur (Fe-S) centers, to quinones in the respiratory chain. Couples the redox reaction to proton translocation (for every two electrons transferred, four hydrogen ions are translocated across the cytoplasmic membrane), and thus conserves the redox energy in a proton gradient. In Brucella abortus (strain S19), this protein is NADH-quinone oxidoreductase subunit B.